We begin with the raw amino-acid sequence, 645 residues long: Rab11 family-interacting protein 5 (645 aa).

Residues Met1–Tyr146 enclose the C2 domain. Ser176, Ser283, Ser286, Ser307, Ser357, and Ser367 each carry phosphoserine. Positions Gly271–Leu299 are disordered. Residues Arg277–Ser286 show a composition bias toward polar residues. The disordered stretch occupies residues Ser341 to Arg550. The segment covering Ser357–Arg374 has biased composition (low complexity). Positions Ser375–Trp387 are enriched in basic and acidic residues. A phosphoserine mark is found at Ser391 and Ser395. The segment covering Arg452–Gly463 has biased composition (basic residues). Ser486, Ser530, Ser539, Ser545, and Ser640 each carry phosphoserine. The 63-residue stretch at Lys578 to Ser640 folds into the FIP-RBD domain.

As to quaternary structure, interacts with RAB11FIP4. Interacts with NAPG. Interacts with RO60. Interacts with RAB11A that has been activated by GTP binding. Post-translationally, phosphorylated on serine and threonine residues. Phosphorylation at Ser-357 is PKA-dependent.

It is found in the cytoplasm. The protein localises to the recycling endosome membrane. It localises to the early endosome membrane. Its subcellular location is the golgi apparatus membrane. The protein resides in the cytoplasmic vesicle. It is found in the secretory vesicle membrane. The protein localises to the mitochondrion membrane. Rab effector involved in protein trafficking from apical recycling endosomes to the apical plasma membrane. Involved in insulin granule exocytosis. May regulate V-ATPase intracellular transport in response to extracellular acidosis. The protein is Rab11 family-interacting protein 5 of Mus musculus (Mouse).